The sequence spans 512 residues: Maturase K (512 aa).

The protein belongs to the intron maturase 2 family. MatK subfamily.

Its subcellular location is the plastid. It localises to the chloroplast. In terms of biological role, usually encoded in the trnK tRNA gene intron. Probably assists in splicing its own and other chloroplast group II introns. This chain is Maturase K, found in Erythranthe guttata (Yellow monkey flower).